A 180-amino-acid polypeptide reads, in one-letter code: WPP domain-containing protein 2 (180 aa).

Low complexity predominate over residues 1 to 26 (MAETAETINTTISSPPPESESSTTIS). 2 disordered regions span residues 1-61 (MAET…LRIW) and 140-180 (SVKA…KSEA). A compositionally biased stretch (polar residues) spans 27–36 (AMTDPTSQEA). Over residues 37–53 (ASKDTDLTKEAESEKKP) the composition is skewed to basic and acidic residues. A WPP region spans residues 44–147 (TKEAESEKKP…LESVKARSNA (104 aa)). S173 carries the phosphoserine modification.

As to quaternary structure, binds to FPP proteins. Interacts with WAP, WIP1, WIP2 and WIP3 through its WPP domain. Interacts with WIT1 and HSP70-1. Expressed in roots, stems, leaves and flowers.

It is found in the nucleus envelope. The protein localises to the cytoplasm. It localises to the nucleus. The protein resides in the golgi apparatus. Its function is as follows. Regulates the mitotic activity in roots. Plays a role with HSP70-1 in facilitating WIT1 nuclear envelope targeting. This Arabidopsis thaliana (Mouse-ear cress) protein is WPP domain-containing protein 2 (WPP2).